Here is a 321-residue protein sequence, read N- to C-terminus: Methionyl-tRNA formyltransferase (321 aa).

113–116 (SILP) provides a ligand contact to (6S)-5,6,7,8-tetrahydrofolate.

It belongs to the Fmt family.

It catalyses the reaction L-methionyl-tRNA(fMet) + (6R)-10-formyltetrahydrofolate = N-formyl-L-methionyl-tRNA(fMet) + (6S)-5,6,7,8-tetrahydrofolate + H(+). Attaches a formyl group to the free amino group of methionyl-tRNA(fMet). The formyl group appears to play a dual role in the initiator identity of N-formylmethionyl-tRNA by promoting its recognition by IF2 and preventing the misappropriation of this tRNA by the elongation apparatus. This chain is Methionyl-tRNA formyltransferase, found in Vibrio atlanticus (strain LGP32) (Vibrio splendidus (strain Mel32)).